The sequence spans 397 residues: Tryptophan synthase beta chain (397 aa).

Lysine 87 is subject to N6-(pyridoxal phosphate)lysine.

It belongs to the TrpB family. In terms of assembly, tetramer of two alpha and two beta chains. Pyridoxal 5'-phosphate is required as a cofactor.

It catalyses the reaction (1S,2R)-1-C-(indol-3-yl)glycerol 3-phosphate + L-serine = D-glyceraldehyde 3-phosphate + L-tryptophan + H2O. It participates in amino-acid biosynthesis; L-tryptophan biosynthesis; L-tryptophan from chorismate: step 5/5. Its function is as follows. The beta subunit is responsible for the synthesis of L-tryptophan from indole and L-serine. This is Tryptophan synthase beta chain from Klebsiella pneumoniae (strain 342).